The following is a 387-amino-acid chain: Testis-expressed protein 9 (387 aa).

Disordered stretches follow at residues 1–25 (MAGRSVRVPRRGSAGTQSRGQLAAG) and 58–133 (REQQ…LKYP). 2 stretches are compositionally biased toward polar residues: residues 70–91 (ALTTSCKEEGGSSSRDLLSSEG) and 103–115 (KNTGPVNKIQNRL). Positions 184–347 (IGTEAQIRFL…ERQKGELMIG (164 aa)) form a coiled coil.

Testis-specific.

The protein resides in the cytoplasm. It is found in the cytoskeleton. Its subcellular location is the microtubule organizing center. The protein localises to the centrosome. It localises to the centriolar satellite. The protein is Testis-expressed protein 9 (Tex9) of Mus musculus (Mouse).